A 510-amino-acid polypeptide reads, in one-letter code: NAD(P)H-quinone oxidoreductase subunit 2, chloroplastic (510 aa).

The next 12 helical transmembrane spans lie at 24–44 (LLLF…GLIL), 59–79 (WFYF…FFRW), 99–119 (IFQF…VEYI), 124–144 (MAIT…MFLC), 149–169 (LITI…LSGY), 184–204 (LLMG…LYGL), 229–249 (ISIA…PAPF), 295–315 (WHLL…LIAL), 323–343 (MLAY…IVGD), 354–374 (YMLF…SFGL), 395–415 (ALSS…AGFF), and 418–438 (LYLF…IGLL).

It belongs to the complex I subunit 2 family. NDH is composed of at least 16 different subunits, 5 of which are encoded in the nucleus.

The protein localises to the plastid. It localises to the chloroplast thylakoid membrane. It catalyses the reaction a plastoquinone + NADH + (n+1) H(+)(in) = a plastoquinol + NAD(+) + n H(+)(out). It carries out the reaction a plastoquinone + NADPH + (n+1) H(+)(in) = a plastoquinol + NADP(+) + n H(+)(out). NDH shuttles electrons from NAD(P)H:plastoquinone, via FMN and iron-sulfur (Fe-S) centers, to quinones in the photosynthetic chain and possibly in a chloroplast respiratory chain. The immediate electron acceptor for the enzyme in this species is believed to be plastoquinone. Couples the redox reaction to proton translocation, and thus conserves the redox energy in a proton gradient. This is NAD(P)H-quinone oxidoreductase subunit 2, chloroplastic from Coelogyne cristata (Orchid).